The primary structure comprises 179 residues: Mediator of RNA polymerase II transcription subunit 28 (179 aa).

Residues 1 to 43 (MASSMCGMFPGQQPPGSLPPPGPGGPGQPGLLTGTPGNRGANN) are disordered. Residues 12–26 (QQPPGSLPPPGPGGP) are compositionally biased toward pro residues. Residues 109-139 (EQVEKEDASELKNELQRKEMLIQKHLAKIHH) adopt a coiled-coil conformation.

It belongs to the Mediator complex subunit 28 family. As to quaternary structure, component of the Mediator complex.

Its subcellular location is the nucleus. Functionally, component of the Mediator complex, a coactivator involved in the regulated transcription of nearly all RNA polymerase II-dependent genes. Mediator functions as a bridge to convey information from gene-specific regulatory proteins to the basal RNA polymerase II transcription machinery. Mediator is recruited to promoters by direct interactions with regulatory proteins and serves as a scaffold for the assembly of a functional preinitiation complex with RNA polymerase II and the general transcription factors. The chain is Mediator of RNA polymerase II transcription subunit 28 (med28) from Danio rerio (Zebrafish).